A 427-amino-acid chain; its full sequence is Adenylosuccinate synthetase (427 aa).

Residues 12 to 18 and 40 to 42 contribute to the GTP site; these read GDEGKGK and GHT. Aspartate 13 (proton acceptor) is an active-site residue. Mg(2+) contacts are provided by aspartate 13 and glycine 40. IMP contacts are provided by residues 13 to 16, 38 to 41, threonine 126, arginine 140, glutamine 221, threonine 236, and arginine 299; these read DEGK and NAGH. The active-site Proton donor is histidine 41. 295–301 is a substrate binding site; that stretch reads STTNRPR. Residues arginine 301, 327 to 329, and 409 to 411 each bind GTP; these read KLD and SLG.

The protein belongs to the adenylosuccinate synthetase family. Homodimer. It depends on Mg(2+) as a cofactor.

It is found in the cytoplasm. It catalyses the reaction IMP + L-aspartate + GTP = N(6)-(1,2-dicarboxyethyl)-AMP + GDP + phosphate + 2 H(+). The protein operates within purine metabolism; AMP biosynthesis via de novo pathway; AMP from IMP: step 1/2. Plays an important role in the de novo pathway of purine nucleotide biosynthesis. Catalyzes the first committed step in the biosynthesis of AMP from IMP. This Borrelia turicatae (strain 91E135) protein is Adenylosuccinate synthetase.